Reading from the N-terminus, the 580-residue chain is tRNA-guanine(15) transglycosylase (580 aa).

Asp-91 functions as the Nucleophile in the catalytic mechanism. Positions 126 and 192 each coordinate substrate. Residues Cys-275, Cys-277, and Cys-280 each coordinate Zn(2+). Residues Arg-504–Glu-579 form the PUA domain.

The protein belongs to the archaeosine tRNA-ribosyltransferase family. The cofactor is Zn(2+).

It carries out the reaction guanosine(15) in tRNA + 7-cyano-7-deazaguanine = 7-cyano-7-carbaguanosine(15) in tRNA + guanine. Its pathway is tRNA modification; archaeosine-tRNA biosynthesis. Functionally, exchanges the guanine residue with 7-cyano-7-deazaguanine (preQ0) at position 15 in the dihydrouridine loop (D-loop) of archaeal tRNAs. The sequence is that of tRNA-guanine(15) transglycosylase from Thermococcus onnurineus (strain NA1).